The sequence spans 118 residues: Small ribosomal subunit protein uS13 (118 aa).

The tract at residues 92–118 (RRSLPVRGQRTKTNARTRKGPRKPIKK) is disordered.

This sequence belongs to the universal ribosomal protein uS13 family. As to quaternary structure, part of the 30S ribosomal subunit. Forms a loose heterodimer with protein S19. Forms two bridges to the 50S subunit in the 70S ribosome.

Functionally, located at the top of the head of the 30S subunit, it contacts several helices of the 16S rRNA. In the 70S ribosome it contacts the 23S rRNA (bridge B1a) and protein L5 of the 50S subunit (bridge B1b), connecting the 2 subunits; these bridges are implicated in subunit movement. Contacts the tRNAs in the A and P-sites. The polypeptide is Small ribosomal subunit protein uS13 (Acinetobacter baylyi (strain ATCC 33305 / BD413 / ADP1)).